The primary structure comprises 538 residues: Putative cysteine ligase BshC (538 aa).

Positions 460-484 (KINEQIELLERMLKRNVEKKHEVEL) form a coiled coil.

This sequence belongs to the BshC family.

In terms of biological role, involved in bacillithiol (BSH) biosynthesis. May catalyze the last step of the pathway, the addition of cysteine to glucosamine malate (GlcN-Mal) to generate BSH. This is Putative cysteine ligase BshC from Bacillus cereus (strain ATCC 10987 / NRS 248).